Here is a 714-residue protein sequence, read N- to C-terminus: Polyribonucleotide nucleotidyltransferase (714 aa).

The Mg(2+) site is built by Asp489 and Asp495. Residues Pro556–Ile615 enclose the KH domain. An S1 motif domain is found at Gly625–Lys693. Residues Ser691–Asp714 are disordered. A compositionally biased stretch (basic and acidic residues) spans Pro700–Asp714.

This sequence belongs to the polyribonucleotide nucleotidyltransferase family. Mg(2+) is required as a cofactor.

It localises to the cytoplasm. The catalysed reaction is RNA(n+1) + phosphate = RNA(n) + a ribonucleoside 5'-diphosphate. Functionally, involved in mRNA degradation. Catalyzes the phosphorolysis of single-stranded polyribonucleotides processively in the 3'- to 5'-direction. The chain is Polyribonucleotide nucleotidyltransferase from Streptococcus equi subsp. equi (strain 4047).